Here is a 416-residue protein sequence, read N- to C-terminus: Gamma-glutamyl phosphate reductase (416 aa).

Belongs to the gamma-glutamyl phosphate reductase family.

The protein localises to the cytoplasm. The catalysed reaction is L-glutamate 5-semialdehyde + phosphate + NADP(+) = L-glutamyl 5-phosphate + NADPH + H(+). It functions in the pathway amino-acid biosynthesis; L-proline biosynthesis; L-glutamate 5-semialdehyde from L-glutamate: step 2/2. Functionally, catalyzes the NADPH-dependent reduction of L-glutamate 5-phosphate into L-glutamate 5-semialdehyde and phosphate. The product spontaneously undergoes cyclization to form 1-pyrroline-5-carboxylate. The protein is Gamma-glutamyl phosphate reductase of Streptococcus thermophilus (strain ATCC BAA-491 / LMD-9).